We begin with the raw amino-acid sequence, 488 residues long: MSFNHHTIEELHELLVAKDISAVELTKATLEDIKAREEAVGSFITIAEEAALKQAAALDAKGIDPDNVMSGIPLAVKDNISTKGILTTAASKMLYNYEPIFDATAVANAYDKDMIIIGKTNMDEFAMGGSTETSYFKKTKNAWDRSRVPGGSSGGSATAVASGQVRLSLGSDTGGSIRQPAAFNGVVGLKPTYGAVSRYGLIAFGSSLDQIGPFAPTVRENAQLLTVIAGSDRKDSTSAPVQIADYTSKIGQDIKGMKIALPKEYLGEGIDPKIKETVLAAAKHFEKLGAIIEEVSLPHSKYGVAVYYIIASSEASSNLQRFDGIRYGFRAADAKSLEDIYVKTRSQGFGDEVKRRIMLGTFSLSSGYYDAYFKKAGQVRTLIIQDFEKVFADYDLILGPTAPTAAFELDTLNHDPVAMYLADLLTIPVNLAGLPAISIPAGFADGLPVGLQLIGPKYSEEVIYQAAAAFEATTDYHKQQPMIFGGDS.

Catalysis depends on charge relay system residues Lys-77 and Ser-152. The Acyl-ester intermediate role is filled by Ser-176.

It belongs to the amidase family. GatA subfamily. As to quaternary structure, heterotrimer of A, B and C subunits.

The enzyme catalyses L-glutamyl-tRNA(Gln) + L-glutamine + ATP + H2O = L-glutaminyl-tRNA(Gln) + L-glutamate + ADP + phosphate + H(+). Allows the formation of correctly charged Gln-tRNA(Gln) through the transamidation of misacylated Glu-tRNA(Gln) in organisms which lack glutaminyl-tRNA synthetase. The reaction takes place in the presence of glutamine and ATP through an activated gamma-phospho-Glu-tRNA(Gln). The sequence is that of Glutamyl-tRNA(Gln) amidotransferase subunit A from Streptococcus equi subsp. zooepidemicus (strain MGCS10565).